The sequence spans 319 residues: MNHKKVVIIGSGPAAHTAAIYLARAEIKPTMYEGMLANGIAAGGQLTTTTEIENFPGFPDGMTGSELMDRMRAQSTKFGTEIITETIAKVDLSSRPFKLWTEFNEDGEPITTDAIVIATGASAKRLHIPGEETYWQQGISACAVCDGAVPIFRNKPLAVIGGGDSACEEAQFLTKYGSKVYLIVRKDHLRASTIMQRRAEQNDKIEILYNTVTLEAQGDGKLLNNLRIKNVKTNEETDLPVNGLFYAIGHTPATKIVEGQVETDETGYIKTIPGSSLTSVPGVFAAGDVQDSKYRQAITSAGSGCMAGLDAEKYLTELE.

FAD-binding positions include 11 to 14 (SGPA), 40 to 41 (IA), Q45, N54, C145, D288, and 295 to 297 (RQA). C142 and C145 are oxidised to a cystine.

It belongs to the class-II pyridine nucleotide-disulfide oxidoreductase family. In terms of assembly, homodimer. It depends on FAD as a cofactor.

Its subcellular location is the cytoplasm. It catalyses the reaction [thioredoxin]-dithiol + NADP(+) = [thioredoxin]-disulfide + NADPH + H(+). In Candida glabrata (strain ATCC 2001 / BCRC 20586 / JCM 3761 / NBRC 0622 / NRRL Y-65 / CBS 138) (Yeast), this protein is Thioredoxin reductase (TRR1).